A 134-amino-acid chain; its full sequence is Transcription antitermination protein NusB (134 aa).

This sequence belongs to the NusB family.

Its function is as follows. Involved in transcription antitermination. Required for transcription of ribosomal RNA (rRNA) genes. Binds specifically to the boxA antiterminator sequence of the ribosomal RNA (rrn) operons. The polypeptide is Transcription antitermination protein NusB (Shewanella woodyi (strain ATCC 51908 / MS32)).